A 531-amino-acid polypeptide reads, in one-letter code: UDP-glucuronosyltransferase 1A6 (531 aa).

The first 26 residues, 1 to 26 (MACLLSAAQRASAGVLFVALWGTVLG), serve as a signal peptide directing secretion. N-linked (GlcNAc...) asparagine glycosylation occurs at Asn294. Residues 489–505 (VIGFLLAIVLTVAFVTF) form a helical membrane-spanning segment.

Belongs to the UDP-glycosyltransferase family.

It is found in the microsome. Its subcellular location is the endoplasmic reticulum membrane. It catalyses the reaction glucuronate acceptor + UDP-alpha-D-glucuronate = acceptor beta-D-glucuronoside + UDP + H(+). It carries out the reaction (5Z,8Z,11Z,14Z)-eicosatetraenoate + UDP-alpha-D-glucuronate = O-[(5Z),(8Z),(11Z),(14Z)-eicosatetraenoyl]-beta-D-glucuronate + UDP. The enzyme catalyses 15-hydroxy-(5Z,8Z,11Z,13E)-eicosatetraenoate + UDP-alpha-D-glucuronate = 15-O-(beta-D-glucuronosyl)-(5Z,8Z,11Z,14Z)-eicosatetraenoate + UDP + H(+). The catalysed reaction is (E)-ferulate + UDP-alpha-D-glucuronate = (E)-4-O-(beta-D-glucuronosyl)-ferulate + UDP + H(+). It catalyses the reaction (E)-ferulate + UDP-alpha-D-glucuronate = (E)-ferulic acid beta-D-glucuronate ester + UDP. Functionally, UDP-glucuronosyltransferase (UGT) that catalyzes phase II biotransformation reactions in which lipophilic substrates are conjugated with glucuronic acid to facilitate their inactivation and excretion from the body. Essential for the elimination and detoxification of drugs, xenobiotics and endogenous compounds. Involved in the glucuronidation of arachidonic acid (AA) and AA-derived eicosanoids including 15-HETE and 20-HETE. Conjugates small planar phenolic molecules such as 4-nitrophenol, 1-naphthol, and 4-methylumbelliferone. The bulky phenol 4-hydroxybiphenyl, androgens and estrogens are not substrates. 2-hydroxybiphenyl is an excellent substrate. Involved in the glucuronidation of the phytochemical ferulic acid at the phenolic or the carboxylic acid group. The protein is UDP-glucuronosyltransferase 1A6 (UGT1) of Oryctolagus cuniculus (Rabbit).